Here is a 528-residue protein sequence, read N- to C-terminus: Low affinity inorganic phosphate transporter 4 (528 aa).

Over 1-18 (MGLEVLEALDSARTQWYH) the chain is Cytoplasmic. Residues 19-39 (VTAIVIAGMGFFTDAYDLFCI) traverse the membrane as a helical segment. Residues 40-68 (STVSKLLGRLYYFDPSTNKPGKLPPSVNN) are Extracellular-facing. A helical transmembrane segment spans residues 69-89 (VVTGVALVGTLSGQLVFGWLG). Residues 90–96 (DKLGRKK) are Cytoplasmic-facing. Residues 97 to 117 (VYGVTLIIMVACAICSGLSFG) form a helical membrane-spanning segment. Residues 118–122 (SSAKS) are Extracellular-facing. The chain crosses the membrane as a helical span at residues 123-143 (VMITLCFFRFWLGFGIGGDYP). Over 144–158 (LSATIMSEYANKRTR) the chain is Cytoplasmic. A helical transmembrane segment spans residues 159–179 (GAFIAAVFAMQGVGIIFAGLV). Residues 180 to 208 (SMVFSGIFKAYYQAPRFNEDPILSTQPEG) lie on the Extracellular side of the membrane. The helical transmembrane segment at 209–229 (DLLWRLILMIGAVPAAMTYYW) threads the bilayer. Over 230-292 (RMKMPETGRY…SEFFNRHGRH (63 aa)) the chain is Cytoplasmic. The helical transmembrane segment at 293 to 313 (LIGTMSCWFLLDIAFYSQNLT) threads the bilayer. Residues 314 to 341 (QKDIYPAMGLIRQDKEMNAIDEVFQTSR) are Extracellular-facing. The chain crosses the membrane as a helical span at residues 342-362 (AMFVVALFGTFPGYWFTVFFI). Residues 363–371 (EKLGRFKIQ) are Cytoplasmic-facing. Residues 372-392 (LVGFFMMSFFMFVIGVKYEYL) form a helical membrane-spanning segment. Topologically, residues 393 to 401 (KDENKNLFA) are extracellular. The helical transmembrane segment at 402–422 (LLYGLTFFFANFGPNSTTFVL) threads the bilayer. At 423-433 (PAELFPTRVRS) the chain is on the cytoplasmic side. Residues 434 to 454 (TCHAFSAASGKAGAMVGAFGI) traverse the membrane as a helical segment. The Extracellular segment spans residues 455–468 (QYYTLDGTPRKIRR). Residues 469-489 (AMMILAFTNLIGFFCTFLVTE) form a helical membrane-spanning segment. Residues 490–528 (TKGRSLEEISGEDGRESELTATPNDRAPGIRQDSRTEKM) are Cytoplasmic-facing. Residues 497 to 507 (EISGEDGRESE) show a composition bias toward basic and acidic residues. Residues 497-528 (EISGEDGRESELTATPNDRAPGIRQDSRTEKM) form a disordered region.

It belongs to the major facilitator superfamily. Phosphate:H(+) symporter (TC 2.A.1.9) family. In terms of tissue distribution, mostly expressed in mycorrhizal roots. Also observed in root tips of non-mycorrhizal roots, in a phosphate (Pi) depended-manner, highest expression levels being observed in low Pi conditions.

The protein resides in the cell membrane. It carries out the reaction phosphate(in) + H(+)(in) = phosphate(out) + H(+)(out). Functionally, low-affinity transporter for external inorganic phosphate (Pi) probably involved in the acquisition of phosphate released by arbuscular mycorrhizal (AM) fungi (e.g. Gigaspora gigantea, Glomus versiforme and G.intraradices) during AM symbiosis; required for propper mycorrhizal arbuscule morphology. Acts as a Pi-sensing machinery at the root tip level, independently of AM fungi, involved in the regulation of early root branching and lateral roots formation. This chain is Low affinity inorganic phosphate transporter 4, found in Medicago truncatula (Barrel medic).